Here is a 245-residue protein sequence, read N- to C-terminus: MSLRSDLINALYDENQKYDVCGIISAEGKIYPLGSDTKVLSTIFELFSRPIINKIAEKHGYIVEEPKQQNHYPDFTLYKPSEPNKKIAIDIKTTYTNKENEKIKFTLGGYTSFIRNNTKNIVYPFDQYIAHWIIGYVYTRVATRKSSLKTYNINELNEIPKPYKGVKVFLQDKWVIAGDLAGSGNTTNIGSIHAHYKDFVEGKGIFDSEDEFLDYWRNYERTSQLRNDKYNNISEYRNWIYRGRK.

Residues Glu45, Asp74, and Asp90 each contribute to the Mg(2+) site. Residues Asp74, Asp90, and Lys92 contribute to the active site.

In terms of assembly, homodimer. It depends on Mg(2+) as a cofactor.

It catalyses the reaction Endonucleolytic cleavage of DNA to give specific double-stranded fragments with terminal 5'-phosphates.. A P subtype restriction enzyme that recognizes the double-stranded sequence 5'-GATATC-3' and cleaves after T-3. The chain is Type II restriction enzyme EcoRV (ecoRVR) from Escherichia coli.